The following is a 136-amino-acid chain: Class I hydrophobin A (136 aa).

The signal sequence occupies residues 1-16; that stretch reads MRFALAITTLIAAVTA. Disulfide bonds link Cys39–Cys109, Cys47–Cys103, Cys48–Cys85, and Cys110–Cys128.

The protein belongs to the fungal hydrophobin family. In terms of tissue distribution, expressed in aerial conidia, in vitro blastospores, submerged conidia, and cells sporulating on chitin and insect cuticle, with hyd1 expression peaking in growing mycelia.

Its subcellular location is the secreted. The protein resides in the cell wall. The protein localises to the spore coat. It is found in the vacuole. It localises to the cytoplasmic vesicle. In terms of biological role, aerial growth, conidiation, and dispersal of filamentous fungi in the environment rely upon a capability of their secreting small amphipathic proteins called hydrophobins (HPBs) with low sequence identity. Class I can self-assemble into an outermost layer of rodlet bundles on aerial cell surfaces, conferring cellular hydrophobicity that supports fungal growth, development and dispersal; whereas Class II form highly ordered films at water-air interfaces through intermolecular interactions but contribute nothing to the rodlet structure. Hyd1A contributes to certain cell wall-related features, such as hydrophobicity but is not involved in cell wall-related events during fungal proliferation in host hemocoel. Hyd1A and hyd1B coregulate the formation, morphology and orderly assembly of rodlet bundles required for conidial hydrophobicity and infectivity. Contributes to the spore coat rodlet layer. The protein is Class I hydrophobin A of Beauveria bassiana (strain ARSEF 2860) (White muscardine disease fungus).